Reading from the N-terminus, the 91-residue chain is Small ribosomal subunit protein bS6 (91 aa).

The protein belongs to the bacterial ribosomal protein bS6 family.

Its function is as follows. Binds together with bS18 to 16S ribosomal RNA. This chain is Small ribosomal subunit protein bS6, found in Leptospira borgpetersenii serovar Hardjo-bovis (strain JB197).